Reading from the N-terminus, the 7354-residue chain is Microtubule-actin cross-linking factor 1, isoforms 1/2/3/4 (7354 aa).

The segment at 1–47 (MSSSDEETLSERSCRSERSCRSERSYRSERSGSLSPCPPGDTLPWNL) is disordered. The tract at residues 1–295 (MSSSDEETLS…VITYVSSIYD (295 aa)) is actin-binding. Residue Ser-4 is modified to Phosphoserine. Residues 9–30 (LSERSCRSERSCRSERSYRSER) are compositionally biased toward basic and acidic residues. Ser-35 is modified (phosphoserine). Thr-42 is subject to Phosphothreonine. Ser-57 bears the Phosphoserine mark. 2 Calponin-homology (CH) domains span residues 78–181 (RVQK…LHFQ) and 194–298 (MSAK…DAFP). One copy of the LRR 1 repeat lies at 148-171 (QRQVKLVNIRNDDITDGNPKLTLG). Phosphoserine is present on Ser-280. LRR repeat units lie at residues 377–399 (LYKL…YHPN) and 441–464 (LNCE…LESG). Positions 868 to 925 (KSTLSVKAICDYRQIEITICKNDECVLEDNSQRTKWKVISPTGNEAMVPSVCFLIPPP) constitute an SH3 domain. Residues 1050 to 1073 (ISELKNIRLLLEECEQRLLKQIQS) form an LRR 5 repeat. Ser-1122 carries the phosphoserine modification. LRR repeat units follow at residues 1128–1154 (ATTL…VYLN), 1187–1210 (PADL…VKDK), and 1257–1282 (HRVI…DYRA). Phosphoserine is present on residues Ser-1367 and Ser-1376. Plectin repeat units lie at residues 1577-1619 (LVLL…QLLG), 1654-1696 (LKVL…ELQS), 1769-1809 (RLLE…CAIL), 1811-1848 (RQLQ…VILE), and 1855-1885 (GLLL…HKIL). Residues Ser-2051, Ser-2077, and Ser-2081 each carry the phosphoserine modification. Composition is skewed to basic and acidic residues over residues 2120-2131 (KEEQAETLREEN) and 2145-2155 (SEGKDLSTEKS). The segment at 2120-2155 (KEEQAETLREENISGDPLLVECPEESEGKDLSTEKS) is disordered. Plectin repeat units lie at residues 2276-2316 (STLS…VKLM), 2352-2393 (NVLM…RILE), 2394-2425 (GQVI…DTAD), 2487-2528 (LLTK…LRKV), and 2671-2715 (LKVL…ASHQ). 3 disordered regions span residues 2806–2841 (AGIR…DSKV), 2951–2978 (EMGG…EVTI), and 3058–3099 (SQET…HISK). Residues 2812-2837 (NGEKAEKGRKISVEMEGQRQDEKASS) are compositionally biased toward basic and acidic residues. A compositionally biased stretch (acidic residues) spans 2968-2978 (SEEESDQEVTI). 2 positions are modified to phosphoserine: Ser-3082 and Ser-3085. 3 LRR repeats span residues 3225–3244 (VGQR…LPTR), 3606–3630 (SGKS…IQSH), and 3657–3681 (LTAL…TRVA). Spectrin repeat units follow at residues 3845–3920 (ELQK…NFEE) and 3962–4070 (QYQQ…ALLQ). Ser-3889 carries the post-translational modification Phosphoserine. Residues 3898-3920 (KGDLRFVTISGQKVLETENNFEE) form an LRR 12 repeat. 2 LRR repeats span residues 4087–4112 (LQSI…VIQE) and 4223–4249 (IQEL…TLGS). The Spectrin 3 repeat unit spans residues 4428-4536 (RMEEVQKEAS…TVARQKQLEE (109 aa)). 2 positions are modified to phosphoserine: Ser-4458 and Ser-4483. 3 LRR repeats span residues 4473 to 4496 (KAFL…LAGL), 4563 to 4583 (GVLG…QFML), and 4728 to 4751 (KKRL…RMNR). A Spectrin 4 repeat occupies 4759–4863 (TQQFQQMFDE…KTANRQSRLK (105 aa)). At Ser-4921 the chain carries Phosphoserine. LRR repeat units follow at residues 5010 to 5035 (NKNL…YLRN), 5131 to 5153 (NKIQ…MLEE), and 5240 to 5263 (KDQV…LIQS). Spectrin repeat units follow at residues 5195 to 5300 (EDFY…QLQE), 5307 to 5409 (KFQD…QLED), 5414 to 5506 (AKQF…ADIT), 5631 to 5735 (RSQQ…ARLE), 5742 to 5844 (NQFW…ALDE), 5961 to 6066 (LAEK…KLED), 6071 to 6175 (AVQY…HKLE), 6181 to 6284 (LGQF…QQLQ), 6289 to 6395 (QAQG…KLEE), 6400 to 6503 (ATEF…RSLD), 6508 to 6614 (RAKQ…KLEE), 6621 to 6722 (QFMD…RLEQ), and 6726 to 6830 (QAEE…QRLE). Thr-5394 is subject to Phosphothreonine. 2 LRR repeats span residues 5654–5678 (MALG…AFSI) and 5763–5787 (AQLP…QLRE). Ser-5988 is modified (phosphoserine). Lys-6166 is subject to N6-acetyllysine. One copy of the LRR 23 repeat lies at 6452 to 6475 (RDQIIELDQTGNQLKFLSQKQDVV). A disordered region spans residues 6904–6937 (SVEPTHAPFMEKSRSGSRKSLNQPTPPPMPILSQ). Ser-6923 carries the post-translational modification Phosphoserine. 2 EF-hand domains span residues 7001–7036 (HKKS…SKFP) and 7037–7072 (TTKL…NKDA). Residues Asp-7014, Asp-7016, Asp-7018, Lys-7020, Glu-7025, Asp-7050, Asp-7052, Asp-7054, Tyr-7056, and Glu-7061 each coordinate Ca(2+). Residues 7077–7155 (TDADKIEDEV…EFLVKNDPCR (79 aa)) enclose the GAR domain. Positions 7077-7354 (TDADKIEDEV…ASPRTPGPKR (278 aa)) are C-terminal tail. Residues 7171 to 7354 (PEGASQGMTP…ASPRTPGPKR (184 aa)) are disordered. Residues 7191–7225 (SSRAASPTRSSSSASQSNHSCTSMPSSPATPASGT) are compositionally biased toward low complexity. Residue Thr-7220 is modified to Phosphothreonine. Positions 7242–7261 (FHSSRTSLAGDTSNSSSPAS) are enriched in polar residues. Ser-7245 and Ser-7258 each carry phosphoserine. Residues 7276–7290 (SRPGSRAGSRAGSRA) show a composition bias toward low complexity. Residues 7279–7294 (GSRAGSRAGSRASSRR) form a 4 X 4 AA tandem repeats of [GS]-S-R-[AR] region. Phosphoserine is present on residues Ser-7296 and Ser-7299. Polar residues predominate over residues 7305-7315 (ETQSACSDTSE). Residues 7316-7327 (SSAAGGQGSSRR) are compositionally biased toward low complexity.

The protein belongs to the plakin or cytolinker family. Interacts with AXIN1, LRP6 and GOLGA4. Found in a complex composed of MACF1, APC, AXIN1, CTNNB1 and GSK3B. Interacts with MAPRE1, CLASP1 and CLASP2. Interacts with CAMSAP3. In terms of processing, phosphorylated on serine residues in the C-terminal tail by GSK3B. Phosphorylation inhibits microtubule-binding and this plays a critical role in bulge stem cell migration and skin wound repair. Wnt-signaling can repress phosphorylation. Enriched in the hair follicle stem cells (at protein level). Isoform 1 and isoform 2 are ubiquitous expressed, with higher levels seen in lung, heart, thymus, spleen and brain.

The protein resides in the cytoplasm. The protein localises to the cytoskeleton. Its subcellular location is the golgi apparatus. It is found in the cell membrane. It localises to the cell projection. The protein resides in the ruffle membrane. Functionally, F-actin-binding protein which plays a role in cross-linking actin to other cytoskeletal proteins and also binds to microtubules. Plays an important role in ERBB2-dependent stabilization of microtubules at the cell cortex. Acts as a positive regulator of Wnt receptor signaling pathway and is involved in the translocation of AXIN1 and its associated complex (composed of APC, CTNNB1 and GSK3B) from the cytoplasm to the cell membrane. Has actin-regulated ATPase activity and is essential for controlling focal adhesions (FAs) assembly and dynamics. Interaction with CAMSAP3 at the minus ends of non-centrosomal microtubules tethers microtubules minus-ends to actin filaments, regulating focal adhesion size and cell migration. May play role in delivery of transport vesicles containing GPI-linked proteins from the trans-Golgi network through its interaction with GOLGA4. Plays a key role in wound healing and epidermal cell migration. Required for efficient upward migration of bulge cells in response to wounding and this function is primarily rooted in its ability to coordinate microtubule dynamics and polarize hair follicle stem cells. As a regulator of actin and microtubule arrangement and stabilization, it plays an essential role in neurite outgrowth, branching and spine formation during brain development. The chain is Microtubule-actin cross-linking factor 1, isoforms 1/2/3/4 from Mus musculus (Mouse).